Consider the following 208-residue polypeptide: Riboflavin synthase (208 aa).

2 Lumazine-binding repeats span residues 1–97 and 98–195; these read MFTG…MGGH and FVQG…EKLV. 2,4-dihydroxypteridine-binding positions include 4–6, 48–50, 62–67, 101–103, Lys137, 146–148, and 160–165; these read GLV, CLT, GIAPES, GHV, SLT, and MMISYT.

Homotrimer.

It carries out the reaction 2 6,7-dimethyl-8-(1-D-ribityl)lumazine + H(+) = 5-amino-6-(D-ribitylamino)uracil + riboflavin. It functions in the pathway cofactor biosynthesis; riboflavin biosynthesis; riboflavin from 2-hydroxy-3-oxobutyl phosphate and 5-amino-6-(D-ribitylamino)uracil: step 2/2. In terms of biological role, catalyzes the dismutation of two molecules of 6,7-dimethyl-8-ribityllumazine, resulting in the formation of riboflavin and 5-amino-6-(D-ribitylamino)uracil. This chain is Riboflavin synthase (rib5), found in Schizosaccharomyces pombe (strain 972 / ATCC 24843) (Fission yeast).